The following is a 131-amino-acid chain: Small ribosomal subunit protein uS8 (131 aa).

The protein belongs to the universal ribosomal protein uS8 family. As to quaternary structure, part of the 30S ribosomal subunit. Contacts proteins S5 and S12.

Functionally, one of the primary rRNA binding proteins, it binds directly to 16S rRNA central domain where it helps coordinate assembly of the platform of the 30S subunit. The protein is Small ribosomal subunit protein uS8 of Ruminiclostridium cellulolyticum (strain ATCC 35319 / DSM 5812 / JCM 6584 / H10) (Clostridium cellulolyticum).